A 116-amino-acid polypeptide reads, in one-letter code: Histone H2B (116 aa).

Basic residues predominate over residues 1–11 (TSGKAAKKAGK). The segment at 1–25 (TSGKAAKKAGKAQKSITKGDKKKRK) is disordered. N6-acetyllysine is present on residues Lys-4, Lys-11, and Lys-14. Ser-103 carries O-linked (GlcNAc) serine glycosylation. A Glycyl lysine isopeptide (Lys-Gly) (interchain with G-Cter in ubiquitin) cross-link involves residue Lys-111.

The nucleosome is a histone octamer containing two molecules each of H2A, H2B, H3 and H4 assembled in one H3-H4 heterotetramer and two H2A-H2B heterodimers. The octamer wraps approximately 147 bp of DNA. In terms of processing, monoubiquitination gives a specific tag for epigenetic transcriptional activation and is also prerequisite for histone H3 'Lys-4' and 'Lys-79' methylation. Post-translationally, glcNAcylation at Ser-103 promotes monoubiquitination of Lys-111. It fluctuates in response to extracellular glucose, and associates with transcribed genes.

The protein localises to the nucleus. Its subcellular location is the chromosome. Core component of nucleosome. Nucleosomes wrap and compact DNA into chromatin, limiting DNA accessibility to the cellular machineries which require DNA as a template. Histones thereby play a central role in transcription regulation, DNA repair, DNA replication and chromosomal stability. DNA accessibility is regulated via a complex set of post-translational modifications of histones, also called histone code, and nucleosome remodeling. Its function is as follows. A mixture of histones H2B and H4 has antimicrobial activity against the Gram-positive bacterium M.luteus. In Penaeus vannamei (Whiteleg shrimp), this protein is Histone H2B.